We begin with the raw amino-acid sequence, 98 residues long: Cystatin-B (98 aa).

N-acetylmethionine is present on Met1. A Secondary area of contact motif is present at residues 46 to 50; it reads QVVAG.

The protein belongs to the cystatin family.

The protein localises to the cytoplasm. Its function is as follows. This is an intracellular thiol proteinase inhibitor. The protein is Cystatin-B (CSTB) of Sus scrofa (Pig).